A 413-amino-acid chain; its full sequence is Histidine--tRNA ligase (413 aa).

Belongs to the class-II aminoacyl-tRNA synthetase family. As to quaternary structure, homodimer.

It is found in the cytoplasm. The enzyme catalyses tRNA(His) + L-histidine + ATP = L-histidyl-tRNA(His) + AMP + diphosphate + H(+). This is Histidine--tRNA ligase from Ehrlichia canis (strain Jake).